The following is a 255-amino-acid chain: SLA class II histocompatibility antigen, DQ haplotype D alpha chain (255 aa).

A signal peptide spans 1–23 (MVPGRVLMWGALALTAVMSACGG). The tract at residues 24–120 (EDIAADHVAS…QVPEVTVFPK (97 aa)) is alpha-1. Over 24 to 217 (EDIAADHVAS…IPAPMSELTE (194 aa)) the chain is Extracellular. N-linked (GlcNAc...) asparagine glycosylation is found at Asn104 and Asn144. Residues 113-205 (PEVTVFPKSP…LDKPLLKHWE (93 aa)) form the Ig-like C1-type domain. The interval 121-204 (SPVMLGQPNT…GLDKPLLKHW (84 aa)) is alpha-2. Cys133 and Cys189 form a disulfide bridge. Residues 205–217 (EPEIPAPMSELTE) form a connecting peptide region. A helical membrane pass occupies residues 218–240 (TVVCALGLIVGLVGIVVGTVFII). The Cytoplasmic segment spans residues 241-255 (QGLRSGGPSRHQGSL).

This sequence belongs to the MHC class II family.

It is found in the membrane. This chain is SLA class II histocompatibility antigen, DQ haplotype D alpha chain, found in Sus scrofa (Pig).